The primary structure comprises 273 residues: 2,3,4,5-tetrahydropyridine-2,6-dicarboxylate N-succinyltransferase (273 aa).

Substrate contacts are provided by Arg-104 and Asp-141.

It belongs to the transferase hexapeptide repeat family. In terms of assembly, homotrimer.

Its subcellular location is the cytoplasm. The catalysed reaction is (S)-2,3,4,5-tetrahydrodipicolinate + succinyl-CoA + H2O = (S)-2-succinylamino-6-oxoheptanedioate + CoA. It participates in amino-acid biosynthesis; L-lysine biosynthesis via DAP pathway; LL-2,6-diaminopimelate from (S)-tetrahydrodipicolinate (succinylase route): step 1/3. This is 2,3,4,5-tetrahydropyridine-2,6-dicarboxylate N-succinyltransferase from Acinetobacter baylyi (strain ATCC 33305 / BD413 / ADP1).